Reading from the N-terminus, the 391-residue chain is Elongation factor Tu (391 aa).

One can recognise a tr-type G domain in the interval 10-201 (KPHVNIGTIG…AVDEYIPTPA (192 aa)). The tract at residues 19 to 26 (GHVDHGKT) is G1. 19 to 26 (GHVDHGKT) contacts GTP. T26 contacts Mg(2+). Residues 55-59 (GITIS) form a G2 region. Positions 76-79 (DCPG) are G3. GTP contacts are provided by residues 76-80 (DCPGH) and 131-134 (NKVD). The tract at residues 131-134 (NKVD) is G4. Residues 169-171 (SAL) form a G5 region.

It belongs to the TRAFAC class translation factor GTPase superfamily. Classic translation factor GTPase family. EF-Tu/EF-1A subfamily. As to quaternary structure, monomer.

It localises to the cytoplasm. It catalyses the reaction GTP + H2O = GDP + phosphate + H(+). GTP hydrolase that promotes the GTP-dependent binding of aminoacyl-tRNA to the A-site of ribosomes during protein biosynthesis. The sequence is that of Elongation factor Tu from Cereibacter sphaeroides (strain ATCC 17025 / ATH 2.4.3) (Rhodobacter sphaeroides).